A 231-amino-acid chain; its full sequence is Aspartate/glutamate leucyltransferase (231 aa).

The protein belongs to the R-transferase family. Bpt subfamily.

It is found in the cytoplasm. It carries out the reaction N-terminal L-glutamyl-[protein] + L-leucyl-tRNA(Leu) = N-terminal L-leucyl-L-glutamyl-[protein] + tRNA(Leu) + H(+). It catalyses the reaction N-terminal L-aspartyl-[protein] + L-leucyl-tRNA(Leu) = N-terminal L-leucyl-L-aspartyl-[protein] + tRNA(Leu) + H(+). Its function is as follows. Functions in the N-end rule pathway of protein degradation where it conjugates Leu from its aminoacyl-tRNA to the N-termini of proteins containing an N-terminal aspartate or glutamate. This is Aspartate/glutamate leucyltransferase from Pseudoalteromonas atlantica (strain T6c / ATCC BAA-1087).